The following is a 1342-amino-acid chain: DNA-directed RNA polymerase subunit beta (1342 aa).

Lys-1022 and Lys-1200 each carry N6-acetyllysine.

This sequence belongs to the RNA polymerase beta chain family. The RNAP catalytic core consists of 2 alpha, 1 beta, 1 beta' and 1 omega subunit. When a sigma factor is associated with the core the holoenzyme is formed, which can initiate transcription.

It carries out the reaction RNA(n) + a ribonucleoside 5'-triphosphate = RNA(n+1) + diphosphate. DNA-dependent RNA polymerase catalyzes the transcription of DNA into RNA using the four ribonucleoside triphosphates as substrates. In Escherichia coli O139:H28 (strain E24377A / ETEC), this protein is DNA-directed RNA polymerase subunit beta.